A 276-amino-acid polypeptide reads, in one-letter code: NADH-cytochrome b5 reductase 2 (276 aa).

Residues 15 to 127 form the FAD-binding FR-type domain; it reads EAKYPLPLIE…RGPRGRLFYH (113 aa). N6-acetyllysine is present on Lys-17. Tyr-18 is modified (phosphotyrosine). FAD-binding positions include 107 to 137 and 146 to 181; these read ENMKIGETIFFRGPRGRLFYHGPGNLGIRPD and LADHLGMIAGGTGITPMLQLIRHITKDPSDRTRMSL.

It belongs to the flavoprotein pyridine nucleotide cytochrome reductase family. FAD serves as cofactor. In terms of tissue distribution, restricted expression.

It carries out the reaction 2 Fe(III)-[cytochrome b5] + NADH = 2 Fe(II)-[cytochrome b5] + NAD(+) + H(+). Functionally, NADH-cytochrome b5 reductases are involved in desaturation and elongation of fatty acids, cholesterol biosynthesis, drug metabolism, and, in erythrocyte, methemoglobin reduction. Responsible for NADH-dependent lucigenin chemiluminescence in spermatozoa by reducing both lucigenin and 2-[4-iodophenyl]-3-[4-nitrophenyl]-5-[2,4-disulfophenyl]-2H tetrazolium monosodium salt (WST-1). The sequence is that of NADH-cytochrome b5 reductase 2 from Homo sapiens (Human).